A 1379-amino-acid chain; its full sequence is DNA-directed RNA polymerase subunit beta'' (1379 aa).

The Zn(2+) site is built by Cys220, Cys293, Cys300, and Cys303.

Belongs to the RNA polymerase beta' chain family. RpoC2 subfamily. In plastids the minimal PEP RNA polymerase catalytic core is composed of four subunits: alpha, beta, beta', and beta''. When a (nuclear-encoded) sigma factor is associated with the core the holoenzyme is formed, which can initiate transcription. Zn(2+) is required as a cofactor.

The protein localises to the plastid. The protein resides in the chloroplast. The catalysed reaction is RNA(n) + a ribonucleoside 5'-triphosphate = RNA(n+1) + diphosphate. Functionally, DNA-dependent RNA polymerase catalyzes the transcription of DNA into RNA using the four ribonucleoside triphosphates as substrates. The protein is DNA-directed RNA polymerase subunit beta'' of Capsella bursa-pastoris (Shepherd's purse).